A 360-amino-acid chain; its full sequence is Peptide chain release factor 1 (360 aa).

Gln-235 is subject to N5-methylglutamine. The interval 285 to 305 (KRQEAEASERRNLLGSGDRSD) is disordered.

The protein belongs to the prokaryotic/mitochondrial release factor family. In terms of processing, methylated by PrmC. Methylation increases the termination efficiency of RF1.

The protein resides in the cytoplasm. Its function is as follows. Peptide chain release factor 1 directs the termination of translation in response to the peptide chain termination codons UAG and UAA. In Proteus mirabilis (strain HI4320), this protein is Peptide chain release factor 1.